We begin with the raw amino-acid sequence, 265 residues long: Glutamate racemase (265 aa).

Substrate contacts are provided by residues 9 to 10 (DS) and 41 to 42 (YS). The Proton donor/acceptor role is filled by C73. Residue 74-75 (NT) participates in substrate binding. Residue C184 is the Proton donor/acceptor of the active site. A substrate-binding site is contributed by 185–186 (TH).

This sequence belongs to the aspartate/glutamate racemases family.

It carries out the reaction L-glutamate = D-glutamate. It functions in the pathway cell wall biogenesis; peptidoglycan biosynthesis. In terms of biological role, provides the (R)-glutamate required for cell wall biosynthesis. The protein is Glutamate racemase of Actinobacillus pleuropneumoniae serotype 5b (strain L20).